The primary structure comprises 208 residues: Small ribosomal subunit protein uS4 (208 aa).

The 64-residue stretch at 96–159 folds into the S4 RNA-binding domain; that stretch reads SRLDNIVYRL…KKNEKVLEAL (64 aa).

It belongs to the universal ribosomal protein uS4 family. Part of the 30S ribosomal subunit. Contacts protein S5. The interaction surface between S4 and S5 is involved in control of translational fidelity.

Its function is as follows. One of the primary rRNA binding proteins, it binds directly to 16S rRNA where it nucleates assembly of the body of the 30S subunit. Functionally, with S5 and S12 plays an important role in translational accuracy. The protein is Small ribosomal subunit protein uS4 of Mycoplasma capricolum subsp. capricolum (strain California kid / ATCC 27343 / NCTC 10154).